A 308-amino-acid polypeptide reads, in one-letter code: Ribosomal RNA small subunit methyltransferase H (308 aa).

S-adenosyl-L-methionine is bound by residues Gly-31–His-33, Asp-51, Phe-75, Asp-97, and Gln-104.

The protein belongs to the methyltransferase superfamily. RsmH family.

It localises to the cytoplasm. It carries out the reaction cytidine(1402) in 16S rRNA + S-adenosyl-L-methionine = N(4)-methylcytidine(1402) in 16S rRNA + S-adenosyl-L-homocysteine + H(+). Specifically methylates the N4 position of cytidine in position 1402 (C1402) of 16S rRNA. This is Ribosomal RNA small subunit methyltransferase H from Tolumonas auensis (strain DSM 9187 / NBRC 110442 / TA 4).